Consider the following 140-residue polypeptide: uncharacterized protein (140 aa).

The segment at 34–88 is disordered; that stretch reads PLRWRNRARNREKPHSPRAVSSPATHSLPPSNPCRLTPTLSSARPREGSCPSKCS.

In terms of tissue distribution, expressed in a range of cell lines, including B-cell lymphoma and prostate.

This is an uncharacterized protein from Homo sapiens (Human).